Consider the following 230-residue polypeptide: RING finger protein 141 (230 aa).

The segment at 154-191 adopts an RING-type zinc-finger fold; that stretch reads ECCICMDGRVDLILPCAHSFCQKCIDKWSDRHRSCPVC.

The chain is RING finger protein 141 (RNF141) from Gallus gallus (Chicken).